Reading from the N-terminus, the 366-residue chain is 1-deoxy-D-xylulose 5-phosphate reductoisomerase (366 aa).

NADPH is bound by residues Thr-7, Gly-8, Ser-9, Ile-10, Gly-31, Asn-33, and Asn-111. Lys-112 provides a ligand contact to 1-deoxy-D-xylulose 5-phosphate. Residue Glu-113 coordinates NADPH. Asp-131 serves as a coordination point for Mn(2+). Residues Ser-132, Glu-133, Ser-162, and His-185 each coordinate 1-deoxy-D-xylulose 5-phosphate. Glu-133 contributes to the Mn(2+) binding site. NADPH is bound at residue Gly-191. 1-deoxy-D-xylulose 5-phosphate contacts are provided by Ser-198, Asn-203, Lys-204, and Glu-207. Mn(2+) is bound at residue Glu-207.

It belongs to the DXR family. Mg(2+) serves as cofactor. The cofactor is Mn(2+).

The enzyme catalyses 2-C-methyl-D-erythritol 4-phosphate + NADP(+) = 1-deoxy-D-xylulose 5-phosphate + NADPH + H(+). It functions in the pathway isoprenoid biosynthesis; isopentenyl diphosphate biosynthesis via DXP pathway; isopentenyl diphosphate from 1-deoxy-D-xylulose 5-phosphate: step 1/6. In terms of biological role, catalyzes the NADPH-dependent rearrangement and reduction of 1-deoxy-D-xylulose-5-phosphate (DXP) to 2-C-methyl-D-erythritol 4-phosphate (MEP). This Nautilia profundicola (strain ATCC BAA-1463 / DSM 18972 / AmH) protein is 1-deoxy-D-xylulose 5-phosphate reductoisomerase.